Consider the following 145-residue polypeptide: Hemoglobin subunit beta-3 (145 aa).

Residues 1-145 enclose the Globin domain; it reads MLTAEEKAAV…VANALAHRYH (145 aa). The residue at position 11 (T11) is a Phosphothreonine. Position 58 is an N6-acetyllysine (K58). H62 contributes to the heme b binding site. K81 is modified (N6-acetyllysine). Position 91 (H91) interacts with heme b. C92 is subject to S-nitrosocysteine.

This sequence belongs to the globin family. In terms of assembly, heterotetramer of two alpha chains and two beta chains. Red blood cells.

Functionally, involved in oxygen transport from the lung to the various peripheral tissues. This is Hemoglobin subunit beta-3 (HBB) from Odocoileus virginianus virginianus (Virginia white-tailed deer).